The following is a 142-amino-acid chain: uncharacterized protein (142 aa).

Residues proline 70–proline 94 are disordered. Residues glutamate 81–proline 94 show a composition bias toward basic and acidic residues.

This is an uncharacterized protein from Bacillus subtilis (strain 168).